Here is a 516-residue protein sequence, read N- to C-terminus: 4-hydroxybenzoate brominase (decarboxylating) (516 aa).

Residues serine 13, glutamate 32, valine 40, phenylalanine 41, histidine 51, valine 102, and glutamine 365 each coordinate FAD.

The protein belongs to the FMO family. It depends on FAD as a cofactor.

The enzyme catalyses 2 bromide + 4-hydroxybenzoate + 2 NADPH + 2 O2 + 5 H(+) = 2,4-dibromophenol + CO2 + 2 NADP(+) + 4 H2O. The catalysed reaction is bromide + 4-hydroxybenzoate + NADPH + O2 + 2 H(+) = 3-bromo-4-hydroxybenzoate + NADP(+) + 2 H2O. It catalyses the reaction 3-bromo-4-hydroxybenzoate + bromide + NADPH + O2 + 3 H(+) = 2,4-dibromophenol + CO2 + NADP(+) + 2 H2O. It carries out the reaction 3,4-dihydroxybenzoate + 2 bromide + 2 NADPH + 2 O2 + 5 H(+) = 3,5-dibromobenzene-1,2-diol + CO2 + 2 NADP(+) + 4 H2O. The enzyme catalyses 3,4-dihydroxybenzoate + bromide + NADPH + O2 + 2 H(+) = 3-bromo-4,5-dihydroxybenzoate + NADP(+) + 2 H2O. The catalysed reaction is 3-bromo-4,5-dihydroxybenzoate + bromide + NADPH + O2 + 3 H(+) = 3,5-dibromobenzene-1,2-diol + CO2 + NADP(+) + 2 H2O. Brominase involved in the biosynthesis of polybrominated aromatic organic compounds. Catalyzes the bromination of 4-hydroxybenzoate (4-HBA) to 3-bromo-4-hydroxybenzoate, followed by bromination and decarboxylation of 3-bromo-4-hydroxybenzoate to 2,4-dibromophenol. Can also use 3,4-dihydroxybenzoate, with lower efficiency, forming 3-bromo-4,5-dihydroxybenzoate and 3,5-dibromobenzene-1,2-diol. The polypeptide is 4-hydroxybenzoate brominase (decarboxylating) (Marinomonas mediterranea (strain ATCC 700492 / JCM 21426 / NBRC 103028 / MMB-1)).